The sequence spans 339 residues: Exopolyphosphatase 1 (339 aa).

The segment at 315–339 (QTSVRDTRGQEVDRNAANRSRGDKT) is disordered. A compositionally biased stretch (basic and acidic residues) spans 319 to 339 (RDTRGQEVDRNAANRSRGDKT).

The protein belongs to the GppA/Ppx family. Homodimer.

The catalysed reaction is [phosphate](n) + H2O = [phosphate](n-1) + phosphate + H(+). In terms of biological role, degradation of inorganic polyphosphates (polyP). Releases orthophosphate processively from the ends of the polyP chain. This chain is Exopolyphosphatase 1, found in Mycobacterium leprae (strain TN).